We begin with the raw amino-acid sequence, 797 residues long: Striatin-3 (797 aa).

At methionine 1 the chain carries N-acetylmethionine. 2 stretches are compositionally biased toward gly residues: residues 1 to 12 and 33 to 43; these read MDELAGGGGGGP and GGNGAAGGGGP. The segment at 1 to 60 is disordered; the sequence is MDELAGGGGGGPAMASPPRQQQGPGGNMSLSPGGNGAAGGGGPPATEGAGPAAGPELSRP. The span at 44–55 shows a compositional bias: low complexity; that stretch reads PATEGAGPAAGP. Residues 71-79 are caveolin-binding; it reads YIQHEWARF. The stretch at 77–136 forms a coiled coil; the sequence is ARFEMERAHWEVERAELQARIAFLQGERKGQENLKKDLVRRIKMLEYALKQERAKYHKLK. Threonine 150 is modified (phosphothreonine). Positions 166 to 183 are calmodulin-binding; the sequence is QNSQLTWKQGRQLLRQYL. A phosphoserine mark is found at serine 202, serine 214, serine 229, serine 257, and serine 335. The disordered stretch occupies residues 313–336; it reads DGEGAGEARSSGDGTEWDKDDLSP. WD repeat units follow at residues 478–517, 531–570, 584–623, 679–718, 721–760, and 767–796; these read SHFDGVRALAFHPVEPVLVTASEDHTLKLWNLQKTVPAKK, AHIGPVLSLAISSNGEQCFSGGTDATIQWWNMPSPNVDPY, AHTDAVWGLAYSGIKNQLLSCSADGTVRLWNPQEKLPCIC, QSSNHINRVVSHPTLPVTITAHEDRHIKFFDNKTGKMIHS, AHLDAVTSLAVDPNGIYLMSGSHDCSIRLWNLDSKTCVQE, and KLDESIYDVAFHPSKAYIASAGADALAKVF.

The protein belongs to the WD repeat striatin family. As to quaternary structure, tetramerizes. Part of the core of STRIPAK complexes composed of PP2A catalytic and scaffolding subunits, the striatins (PP2A regulatory subunits), the striatin-associated proteins MOB4, STRIP1 and STRIP2, PDCD10 and members of the STE20 kinases, such as STK24 and STK26. The STRIPAK complex can be extended by adapter proteins such as SLMAP:SIKE1 or CTTNBP2NL. Interacts with CDC42BPB.

It is found in the cytoplasm. Its subcellular location is the membrane. In terms of biological role, calmodulin-binding scaffolding protein which is the center of the striatin-interacting phosphatase and kinase (STRIPAK) complexes. STRIPAK complexes have critical roles in protein (de)phosphorylation and are regulators of multiple signaling pathways including Hippo, MAPK, nuclear receptor and cytoskeleton remodeling. Different types of STRIPAK complexes are involved in a variety of biological processes such as cell growth, differentiation, apoptosis, metabolism and immune regulation. The chain is Striatin-3 (STRN3) from Bos taurus (Bovine).